The sequence spans 70 residues: EICPTFLRVIESLFLDTPSSFEAAMGFFSPDQDMSEAGAQLKKVLDTLPAKARDSIIKLMEKIDKSLLCN.

Belongs to the secretoglobin family. In terms of assembly, antiparallel homodimer; disulfide-linked. Interaction with LMBR1L is controversial. In terms of tissue distribution, club cells (nonciliated cells of the surface epithelium of the pulmonary airways).

The protein localises to the secreted. Binds phosphatidylcholine, phosphatidylinositol, polychlorinated biphenyls (PCB) and weakly progesterone, potent inhibitor of phospholipase A2. This Macaca fuscata fuscata (Japanese macaque) protein is Uteroglobin (SCGB1A1).